The following is a 396-amino-acid chain: Putative carbamoyltransferase YgeW (396 aa).

Residues 71–74, Gln98, 165–168, and 330–331 each bind carbamoyl phosphate; these read STRT, HPTQ, and CL.

This sequence belongs to the aspartate/ornithine carbamoyltransferase superfamily. Homotrimer.

The protein is Putative carbamoyltransferase YgeW (ygeW) of Escherichia coli O6:H1 (strain CFT073 / ATCC 700928 / UPEC).